The following is a 388-amino-acid chain: N-acetylneuraminate epimerase (388 aa).

The signal sequence occupies residues 1–26 (MFSLIGAKRQAIGIAALAWSTGAVMA). Kelch repeat units lie at residues 48-92 (MAYV…AAAG), 94-147 (KIFA…VGLA), 149-186 (GRIA…KLVD), 187-232 (SYMG…ATMG), 236-285 (FLLV…VAGA), 307-356 (ANAA…DAPG), and 358-387 (LLVV…LSVE).

It belongs to the NanM family. In terms of assembly, homodimer.

The protein resides in the periplasm. The catalysed reaction is N-acetyl-alpha-neuraminate = N-acetyl-beta-neuraminate. Converts alpha-N-acetylneuranimic acid (Neu5Ac) to the beta-anomer, accelerating the equilibrium between the alpha- and beta-anomers. Probably facilitates sialidase-negative bacteria to compete successfully for limited amounts of extracellular Neu5Ac, which is likely taken up in the beta-anomer. In addition, the rapid removal of sialic acid from solution might be advantageous to the bacterium to damp down host responses. The chain is N-acetylneuraminate epimerase from Brucella suis (strain ATCC 23445 / NCTC 10510).